The primary structure comprises 789 residues: Trans-4-hydroxy-L-proline dehydratase (789 aa).

The PFL domain occupies 7–663; it reads ERTKKLREES…IMGASPNGRL (657 aa). The active-site Cysteine radical intermediate is the cysteine 434. The active-site Proton acceptor is the glutamate 436. Residues 670-789 form the Glycine radical domain; sequence EGISPEKGGD…EIIGRTEQTF (120 aa). Glycine 765 carries the post-translational modification Glycine radical.

It belongs to the glycyl radical enzyme (GRE) family. HYPD subfamily. Requires the activating protein PflE to generate the key active site glycyl radical on Gly-765 that is involved in catalysis.

The catalysed reaction is trans-4-hydroxy-L-proline = (S)-1-pyrroline-5-carboxylate + H2O + H(+). Functionally, glycine radical enzyme that catalyzes the dehydration of the non-proteinogenic amino acid trans-4-hydroxy-L-proline (Hyp) to produce delta(1)-pyrroline-5-carboxylate (P5C). Is involved in the anaerobic degradation of 4-hydroxyproline. The sequence is that of Trans-4-hydroxy-L-proline dehydratase from Clostridioides difficile (Peptoclostridium difficile).